The following is a 355-amino-acid chain: Phosphate acyltransferase (355 aa).

This sequence belongs to the PlsX family. In terms of assembly, homodimer. Probably interacts with PlsY.

Its subcellular location is the cytoplasm. It catalyses the reaction a fatty acyl-[ACP] + phosphate = an acyl phosphate + holo-[ACP]. Its pathway is lipid metabolism; phospholipid metabolism. Functionally, catalyzes the reversible formation of acyl-phosphate (acyl-PO(4)) from acyl-[acyl-carrier-protein] (acyl-ACP). This enzyme utilizes acyl-ACP as fatty acyl donor, but not acyl-CoA. In Erythrobacter litoralis (strain HTCC2594), this protein is Phosphate acyltransferase.